The sequence spans 399 residues: uncharacterized protein (399 aa).

Belongs to the NADH:flavin oxidoreductase/NADH oxidase family. In terms of assembly, directly interacts with lipoylated GcvH-L (SpyM50867).

This is an uncharacterized protein from Streptococcus pyogenes serotype M5 (strain Manfredo).